The sequence spans 236 residues: UPF0173 metal-dependent hydrolase DSY1309 (236 aa).

It belongs to the UPF0173 family.

The chain is UPF0173 metal-dependent hydrolase DSY1309 from Desulfitobacterium hafniense (strain Y51).